Consider the following 311-residue polypeptide: MSQQLPVRIATRKSPLALWQAHFVKDALQAAHPGLEVELVTMVTKGDIILDTPLAKIGGKGLFVKELEVAMLEGRADLAVHSMKDVPVEFPEGLGLVTICERGDPRDAFVSNTYNNIDELPQGATVGTCSLRRQCQLKEYRPDLIIKELRGNVGTRLQKLDDGNYDAIILACAGLIRLGLEDRIKSSIEPEQSLPAVGQGAVGIETRLNDDRIRALLAPLNHPETAHRVLCERAMNNRLEGGCQVPIGSYSLIDGDQIWLRALVGEPDGSIMVRGETTGPVSDAEELGTKLAEQLLNDGAKDILDRLYADA.

C243 bears the S-(dipyrrolylmethanemethyl)cysteine mark.

Belongs to the HMBS family. As to quaternary structure, monomer. Requires dipyrromethane as cofactor.

It catalyses the reaction 4 porphobilinogen + H2O = hydroxymethylbilane + 4 NH4(+). Its pathway is porphyrin-containing compound metabolism; protoporphyrin-IX biosynthesis; coproporphyrinogen-III from 5-aminolevulinate: step 2/4. In terms of biological role, tetrapolymerization of the monopyrrole PBG into the hydroxymethylbilane pre-uroporphyrinogen in several discrete steps. The polypeptide is Porphobilinogen deaminase (Aliivibrio salmonicida (strain LFI1238) (Vibrio salmonicida (strain LFI1238))).